Consider the following 122-residue polypeptide: Small ribosomal subunit protein uS13 (122 aa).

Positions 95–122 (GLPVRGQRTKTNARTRKGPKKTIAGKKK) are disordered.

The protein belongs to the universal ribosomal protein uS13 family. As to quaternary structure, part of the 30S ribosomal subunit. Forms a loose heterodimer with protein S19. Forms two bridges to the 50S subunit in the 70S ribosome.

Its function is as follows. Located at the top of the head of the 30S subunit, it contacts several helices of the 16S rRNA. In the 70S ribosome it contacts the 23S rRNA (bridge B1a) and protein L5 of the 50S subunit (bridge B1b), connecting the 2 subunits; these bridges are implicated in subunit movement. Contacts the tRNAs in the A and P-sites. The chain is Small ribosomal subunit protein uS13 from Corynebacterium diphtheriae (strain ATCC 700971 / NCTC 13129 / Biotype gravis).